A 262-amino-acid chain; its full sequence is Small ribosomal subunit protein uS2 (262 aa).

Residues Val228–Asn262 form a disordered region. Residues Asp243–Glu254 show a composition bias toward acidic residues.

Belongs to the universal ribosomal protein uS2 family.

The chain is Small ribosomal subunit protein uS2 from Staphylococcus epidermidis (strain ATCC 35984 / DSM 28319 / BCRC 17069 / CCUG 31568 / BM 3577 / RP62A).